The sequence spans 695 residues: DNA ligase (695 aa).

Residues 36–40 (DADYD), 85–86 (SL), and glutamate 123 contribute to the NAD(+) site. Lysine 125 serves as the catalytic N6-AMP-lysine intermediate. Residues arginine 146, glutamate 182, lysine 318, and lysine 342 each coordinate NAD(+). Zn(2+) is bound by residues cysteine 436, cysteine 439, cysteine 454, and cysteine 460. Positions 617–695 (LQSGDLAGKT…EDGLKALLSQ (79 aa)) constitute a BRCT domain.

It belongs to the NAD-dependent DNA ligase family. LigA subfamily. Mg(2+) serves as cofactor. Mn(2+) is required as a cofactor.

The catalysed reaction is NAD(+) + (deoxyribonucleotide)n-3'-hydroxyl + 5'-phospho-(deoxyribonucleotide)m = (deoxyribonucleotide)n+m + AMP + beta-nicotinamide D-nucleotide.. Functionally, DNA ligase that catalyzes the formation of phosphodiester linkages between 5'-phosphoryl and 3'-hydroxyl groups in double-stranded DNA using NAD as a coenzyme and as the energy source for the reaction. It is essential for DNA replication and repair of damaged DNA. In Bordetella avium (strain 197N), this protein is DNA ligase.